The following is a 243-amino-acid chain: UDP-2,3-diacylglucosamine hydrolase (243 aa).

5 residues coordinate Mn(2+): Asp9, His11, Asp42, Asn79, and His114. Asn79 to Arg80 is a substrate binding site. Substrate is bound by residues Asp122, Ser160, Asn164, and His195. His195 and His197 together coordinate Mn(2+).

Belongs to the LpxH family. Mn(2+) serves as cofactor.

Its subcellular location is the cell inner membrane. The catalysed reaction is UDP-2-N,3-O-bis[(3R)-3-hydroxytetradecanoyl]-alpha-D-glucosamine + H2O = 2-N,3-O-bis[(3R)-3-hydroxytetradecanoyl]-alpha-D-glucosaminyl 1-phosphate + UMP + 2 H(+). It participates in glycolipid biosynthesis; lipid IV(A) biosynthesis; lipid IV(A) from (3R)-3-hydroxytetradecanoyl-[acyl-carrier-protein] and UDP-N-acetyl-alpha-D-glucosamine: step 4/6. In terms of biological role, hydrolyzes the pyrophosphate bond of UDP-2,3-diacylglucosamine to yield 2,3-diacylglucosamine 1-phosphate (lipid X) and UMP by catalyzing the attack of water at the alpha-P atom. Involved in the biosynthesis of lipid A, a phosphorylated glycolipid that anchors the lipopolysaccharide to the outer membrane of the cell. The chain is UDP-2,3-diacylglucosamine hydrolase from Coxiella burnetii (strain RSA 331 / Henzerling II).